The chain runs to 292 residues: Protease HtpX homolog (292 aa).

2 consecutive transmembrane segments (helical) span residues 7–27 and 29–49; these read TFIL…LIGG and GGAV…WWNS. Histidine 131 provides a ligand contact to Zn(2+). Glutamate 132 is a catalytic residue. Residue histidine 135 participates in Zn(2+) binding. 2 helical membrane-spanning segments follow: residues 148 to 168 and 178 to 198; these read ATMA…SMFG and LAAI…QMAI. Glutamate 203 is a Zn(2+) binding site.

This sequence belongs to the peptidase M48B family. The cofactor is Zn(2+).

It localises to the cell inner membrane. The protein is Protease HtpX homolog of Paracoccus denitrificans (strain Pd 1222).